The sequence spans 693 residues: Elongation factor G 1 (693 aa).

Residues Asn4–His281 form the tr-type G domain. Residues Ala13 to Thr20, Asp80 to His84, and Asn134 to Asp137 contribute to the GTP site.

The protein belongs to the TRAFAC class translation factor GTPase superfamily. Classic translation factor GTPase family. EF-G/EF-2 subfamily.

The protein resides in the cytoplasm. Catalyzes the GTP-dependent ribosomal translocation step during translation elongation. During this step, the ribosome changes from the pre-translocational (PRE) to the post-translocational (POST) state as the newly formed A-site-bound peptidyl-tRNA and P-site-bound deacylated tRNA move to the P and E sites, respectively. Catalyzes the coordinated movement of the two tRNA molecules, the mRNA and conformational changes in the ribosome. The sequence is that of Elongation factor G 1 (fusA) from Borreliella burgdorferi (strain ATCC 35210 / DSM 4680 / CIP 102532 / B31) (Borrelia burgdorferi).